The following is a 430-amino-acid chain: DD-carboxypeptidase/endopeptidase Mpg (430 aa).

Positions 295, 299, and 375 each coordinate Zn(2+).

The protein belongs to the peptidase M23B family. In terms of assembly, monomer. Zn(2+) serves as cofactor. In terms of processing, likely to be synthesized as a proenzyme. The cleavage of the N-terminal domain is probably required for the activation of the enzyme.

Its subcellular location is the cell outer membrane. Functionally, has both endopeptidase and DD-carboxypeptidase activities. Degrades cell wall peptidoglycan (PG) to allow consummate expression of pili. This Neisseria meningitidis serogroup B (strain ATCC 13091 / M2091) protein is DD-carboxypeptidase/endopeptidase Mpg.